Here is a 203-residue protein sequence, read N- to C-terminus: Superoxide dismutase [Mn] (203 aa).

Mn(2+) contacts are provided by histidine 27, histidine 81, aspartate 167, and histidine 171.

It belongs to the iron/manganese superoxide dismutase family. As to quaternary structure, homodimer. The cofactor is Mn(2+).

It carries out the reaction 2 superoxide + 2 H(+) = H2O2 + O2. Its function is as follows. Destroys superoxide anion radicals which are normally produced within the cells and which are toxic to biological systems. This Buchnera aphidicola subsp. Acyrthosiphon pisum (strain APS) (Acyrthosiphon pisum symbiotic bacterium) protein is Superoxide dismutase [Mn] (sodA).